The following is a 350-amino-acid chain: DNA polymerase IV (350 aa).

One can recognise a UmuC domain in the interval 7–188; sequence IIHIDMDYFF…LPVKKLFGVG (182 aa). Residues Asp11 and Asp106 each contribute to the Mg(2+) site. Glu107 is a catalytic residue.

The protein belongs to the DNA polymerase type-Y family. As to quaternary structure, monomer. The cofactor is Mg(2+).

The protein resides in the cytoplasm. The enzyme catalyses DNA(n) + a 2'-deoxyribonucleoside 5'-triphosphate = DNA(n+1) + diphosphate. Functionally, poorly processive, error-prone DNA polymerase involved in untargeted mutagenesis. Copies undamaged DNA at stalled replication forks, which arise in vivo from mismatched or misaligned primer ends. These misaligned primers can be extended by PolIV. Exhibits no 3'-5' exonuclease (proofreading) activity. May be involved in translesional synthesis, in conjunction with the beta clamp from PolIII. In Francisella philomiragia subsp. philomiragia (strain ATCC 25017 / CCUG 19701 / FSC 153 / O#319-036), this protein is DNA polymerase IV.